We begin with the raw amino-acid sequence, 706 residues long: Probable N(6)-adenosine-methyltransferase MT-A70-like (706 aa).

Disordered stretches follow at residues 64-114 (RPFV…VAAA) and 223-261 (TLPL…PDMW). Over residues 103 to 114 (SPGSSPASVAAA) the composition is skewed to low complexity. A compositionally biased stretch (pro residues) spans 227 to 236 (LQPPPAPQMP). S-adenosyl-L-methionine is bound by residues 479–480 (DI) and Asp497. Residues 567–580 (RIIRTGRTGHWLNH) form a positively charged region required for RNA-binding region. S-adenosyl-L-methionine is bound by residues Lys614, 637–640 (RMHN), and 650–651 (NQ). Positions 669–706 (AYPDSEVQPPSPPRASAPIDGDQGTSQKPTVSDGERPA) are disordered.

The protein belongs to the MT-A70-like family.

It is found in the nucleus. It catalyses the reaction an adenosine in mRNA + S-adenosyl-L-methionine = an N(6)-methyladenosine in mRNA + S-adenosyl-L-homocysteine + H(+). Functionally, probable N6-methyltransferase that methylates adenosine residues of some mRNAs. N6-methyladenosine (m6A), which is present at internal sites of some mRNAs, may play a role in the efficiency of mRNA splicing, transport or translation. This is Probable N(6)-adenosine-methyltransferase MT-A70-like from Oryza sativa subsp. japonica (Rice).